Reading from the N-terminus, the 431-residue chain is Enolase (431 aa).

Residue Gln-167 participates in (2R)-2-phosphoglycerate binding. The active-site Proton donor is Glu-209. 3 residues coordinate Mg(2+): Asp-246, Glu-290, and Asp-317. (2R)-2-phosphoglycerate is bound by residues Lys-342, Arg-371, Ser-372, and Lys-393. Lys-342 serves as the catalytic Proton acceptor.

Belongs to the enolase family. In terms of assembly, component of the RNA degradosome, a multiprotein complex involved in RNA processing and mRNA degradation. Requires Mg(2+) as cofactor.

The protein localises to the cytoplasm. It localises to the secreted. The protein resides in the cell surface. The catalysed reaction is (2R)-2-phosphoglycerate = phosphoenolpyruvate + H2O. Its pathway is carbohydrate degradation; glycolysis; pyruvate from D-glyceraldehyde 3-phosphate: step 4/5. In terms of biological role, catalyzes the reversible conversion of 2-phosphoglycerate (2-PG) into phosphoenolpyruvate (PEP). It is essential for the degradation of carbohydrates via glycolysis. The chain is Enolase from Serratia proteamaculans (strain 568).